A 236-amino-acid polypeptide reads, in one-letter code: Thylakoid lumenal 17.4 kDa protein, chloroplastic (236 aa).

Pentapeptide repeat domains are found at residues 124-163 and 169-208; these read TNLKGKTLSAALMVGAKFDGADMTEVVMSKAYAVEASFKG and AVIDRVNFGKSNLKGAVFRNTVLSGSTFEEANLEDVVFED.

In terms of assembly, interacts in vitro with LTO1.

It is found in the plastid. It localises to the chloroplast thylakoid lumen. The chain is Thylakoid lumenal 17.4 kDa protein, chloroplastic from Arabidopsis thaliana (Mouse-ear cress).